A 318-amino-acid polypeptide reads, in one-letter code: Aspartate carbamoyltransferase catalytic subunit (318 aa).

Residues Arg-64 and Thr-65 each contribute to the carbamoyl phosphate site. Lys-92 contributes to the L-aspartate binding site. Carbamoyl phosphate-binding residues include Arg-114, His-142, and Gln-145. Residues Arg-175 and Arg-229 each coordinate L-aspartate. Carbamoyl phosphate is bound by residues Gly-270 and Pro-271.

The protein belongs to the aspartate/ornithine carbamoyltransferase superfamily. ATCase family. Heterododecamer (2C3:3R2) of six catalytic PyrB chains organized as two trimers (C3), and six regulatory PyrI chains organized as three dimers (R2).

It carries out the reaction carbamoyl phosphate + L-aspartate = N-carbamoyl-L-aspartate + phosphate + H(+). Its pathway is pyrimidine metabolism; UMP biosynthesis via de novo pathway; (S)-dihydroorotate from bicarbonate: step 2/3. In terms of biological role, catalyzes the condensation of carbamoyl phosphate and aspartate to form carbamoyl aspartate and inorganic phosphate, the committed step in the de novo pyrimidine nucleotide biosynthesis pathway. This is Aspartate carbamoyltransferase catalytic subunit from Rhodospirillum centenum (strain ATCC 51521 / SW).